We begin with the raw amino-acid sequence, 186 residues long: Peptide deformylase (186 aa).

2 residues coordinate Fe cation: Cys-94 and His-136. Residue Glu-137 is part of the active site. Fe cation is bound at residue His-140.

It belongs to the polypeptide deformylase family. Fe(2+) is required as a cofactor.

The enzyme catalyses N-terminal N-formyl-L-methionyl-[peptide] + H2O = N-terminal L-methionyl-[peptide] + formate. Functionally, removes the formyl group from the N-terminal Met of newly synthesized proteins. Requires at least a dipeptide for an efficient rate of reaction. N-terminal L-methionine is a prerequisite for activity but the enzyme has broad specificity at other positions. The protein is Peptide deformylase of Prosthecochloris aestuarii (strain DSM 271 / SK 413).